Reading from the N-terminus, the 545-residue chain is Glucose-6-phosphate isomerase (545 aa).

The active-site Proton donor is glutamate 351. Residues histidine 382 and lysine 510 contribute to the active site.

It belongs to the GPI family.

The protein localises to the cytoplasm. The enzyme catalyses alpha-D-glucose 6-phosphate = beta-D-fructose 6-phosphate. It participates in carbohydrate biosynthesis; gluconeogenesis. The protein operates within carbohydrate degradation; glycolysis; D-glyceraldehyde 3-phosphate and glycerone phosphate from D-glucose: step 2/4. Functionally, catalyzes the reversible isomerization of glucose-6-phosphate to fructose-6-phosphate. This chain is Glucose-6-phosphate isomerase, found in Shewanella sediminis (strain HAW-EB3).